Consider the following 494-residue polypeptide: Costunolide synthase (494 aa).

A helical membrane pass occupies residues 3-23 (PLTIVSLVVASLFLFAFWALS). Position 432 (Cys-432) interacts with heme.

The protein belongs to the cytochrome P450 family. Heme serves as cofactor.

Its subcellular location is the membrane. The catalysed reaction is germacra-1(10),4,11(13)-trien-12-oate + reduced [NADPH--hemoprotein reductase] + O2 = (+)-costunolide + oxidized [NADPH--hemoprotein reductase] + 2 H2O. In terms of biological role, hydroxylates germacrene A acid to 6-alpha-hydroxy-germacrne A acid, a precursor of sesquiterpene lactones that spontaneously undergoes a lactonization which yields costunolide. Costunolide can then spontaneously conjugate to glutathione or cysteine. The protein is Costunolide synthase (CYP71BL3) of Cichorium intybus (Chicory).